A 163-amino-acid chain; its full sequence is Neurotrophin-3 (163 aa).

The signal sequence occupies residues 1–3; sequence IQS. Positions 4–119 are excised as a propeptide; it reads TSMDQGILTE…ALNRTSRRKR (116 aa). Disordered regions lie at residues 38–60 and 90–131; these read ARTK…ATAS and LLSE…YSVC. N-linked (GlcNAc...) asparagine glycosylation occurs at Asn-112.

It belongs to the NGF-beta family.

The protein localises to the secreted. Its function is as follows. Seems to promote the survival of visceral and proprioceptive sensory neurons. This chain is Neurotrophin-3 (NTF3), found in Eunectes notaeus (Yellow anaconda).